Reading from the N-terminus, the 500-residue chain is Glycerol kinase (500 aa).

Thr-12 serves as a coordination point for ADP. ATP contacts are provided by Thr-12, Thr-13, and Ser-14. Residue Thr-12 coordinates sn-glycerol 3-phosphate. Arg-16 provides a ligand contact to ADP. Residues Arg-82, Glu-83, Tyr-135, and Asp-245 each contribute to the sn-glycerol 3-phosphate site. Positions 82, 83, 135, 245, and 246 each coordinate glycerol. Residues Thr-267 and Gly-310 each coordinate ADP. ATP is bound by residues Thr-267, Gly-310, Gln-314, and Gly-411. The ADP site is built by Gly-411 and Asn-415.

It belongs to the FGGY kinase family. Homotetramer and homodimer (in equilibrium).

It carries out the reaction glycerol + ATP = sn-glycerol 3-phosphate + ADP + H(+). The protein operates within polyol metabolism; glycerol degradation via glycerol kinase pathway; sn-glycerol 3-phosphate from glycerol: step 1/1. With respect to regulation, activated by phosphorylation and inhibited by fructose 1,6-bisphosphate (FBP). In terms of biological role, key enzyme in the regulation of glycerol uptake and metabolism. Catalyzes the phosphorylation of glycerol to yield sn-glycerol 3-phosphate. In Clostridium perfringens (strain SM101 / Type A), this protein is Glycerol kinase.